We begin with the raw amino-acid sequence, 610 residues long: DNA mismatch repair protein MutL (610 aa).

The protein belongs to the DNA mismatch repair MutL/HexB family.

Functionally, this protein is involved in the repair of mismatches in DNA. It is required for dam-dependent methyl-directed DNA mismatch repair. May act as a 'molecular matchmaker', a protein that promotes the formation of a stable complex between two or more DNA-binding proteins in an ATP-dependent manner without itself being part of a final effector complex. The protein is DNA mismatch repair protein MutL of Rickettsia rickettsii (strain Iowa).